Consider the following 453-residue polypeptide: Bifunctional protein GlmU (453 aa).

The segment at 1-226 (MKFSAVILAA…PIEVEGVNDR (226 aa)) is pyrophosphorylase. UDP-N-acetyl-alpha-D-glucosamine is bound by residues 8–11 (LAAG), Lys-22, Gln-73, 78–79 (GT), 100–102 (YGD), Gly-137, Glu-151, Asn-166, and Asn-224. Residue Asp-102 participates in Mg(2+) binding. Asn-224 provides a ligand contact to Mg(2+). Residues 227–247 (AQLARLERAFQAAQAKKLLEQ) form a linker region. Residues 248 to 453 (GVMLRDPARF…TGWQRPVKKK (206 aa)) are N-acetyltransferase. UDP-N-acetyl-alpha-D-glucosamine contacts are provided by Arg-330 and Lys-348. The active-site Proton acceptor is the His-360. Positions 363 and 374 each coordinate UDP-N-acetyl-alpha-D-glucosamine. Acetyl-CoA is bound by residues Ala-377, 383 to 384 (NY), Ser-402, Ala-420, and Arg-437.

In the N-terminal section; belongs to the N-acetylglucosamine-1-phosphate uridyltransferase family. The protein in the C-terminal section; belongs to the transferase hexapeptide repeat family. As to quaternary structure, homotrimer. Requires Mg(2+) as cofactor.

It is found in the cytoplasm. It carries out the reaction alpha-D-glucosamine 1-phosphate + acetyl-CoA = N-acetyl-alpha-D-glucosamine 1-phosphate + CoA + H(+). The enzyme catalyses N-acetyl-alpha-D-glucosamine 1-phosphate + UTP + H(+) = UDP-N-acetyl-alpha-D-glucosamine + diphosphate. The protein operates within nucleotide-sugar biosynthesis; UDP-N-acetyl-alpha-D-glucosamine biosynthesis; N-acetyl-alpha-D-glucosamine 1-phosphate from alpha-D-glucosamine 6-phosphate (route II): step 2/2. Its pathway is nucleotide-sugar biosynthesis; UDP-N-acetyl-alpha-D-glucosamine biosynthesis; UDP-N-acetyl-alpha-D-glucosamine from N-acetyl-alpha-D-glucosamine 1-phosphate: step 1/1. It functions in the pathway bacterial outer membrane biogenesis; LPS lipid A biosynthesis. Its function is as follows. Catalyzes the last two sequential reactions in the de novo biosynthetic pathway for UDP-N-acetylglucosamine (UDP-GlcNAc). The C-terminal domain catalyzes the transfer of acetyl group from acetyl coenzyme A to glucosamine-1-phosphate (GlcN-1-P) to produce N-acetylglucosamine-1-phosphate (GlcNAc-1-P), which is converted into UDP-GlcNAc by the transfer of uridine 5-monophosphate (from uridine 5-triphosphate), a reaction catalyzed by the N-terminal domain. In Vibrio vulnificus (strain CMCP6), this protein is Bifunctional protein GlmU.